A 392-amino-acid polypeptide reads, in one-letter code: Protein DJ-1 homolog A (392 aa).

PfpI endopeptidase domains are found at residues 6 to 174 (KTVL…EQLF) and 212 to 378 (PQIL…EKFY).

It belongs to the peptidase C56 family. Homodimer. Interacts with CSD1 and GPX2.

Its subcellular location is the cytoplasm. The protein resides in the cytosol. It is found in the nucleus. Functionally, involved in oxidative stress response. Confers protection against diverse stresses by binding both CSD1 and GPX2 and mediating the cytosolic activation of the Cu-Zn-dependent superoxide dismutase activity of CSD1. This chain is Protein DJ-1 homolog A (DJ1A), found in Arabidopsis thaliana (Mouse-ear cress).